Consider the following 98-residue polypeptide: Lipolysis-activating peptide 1-alpha chain (98 aa).

The signal sequence occupies residues 1 to 22; the sequence is MMKLVLFGIIVILFSMIGSIHG. The LCN-type CS-alpha/beta domain maps to 26-89; that stretch reads PGNYPLNTYG…IWDAVKRHCK (64 aa). 3 cysteine pairs are disulfide-bonded: Cys-40–Cys-63, Cys-49–Cys-68, and Cys-53–Cys-70. At Lys-96 the chain carries Lysine amide.

Belongs to the long (3 C-C) scorpion toxin superfamily. In terms of assembly, monomer (edited version) and heterodimer (non-edited version) of this alpha chain and a beta chain (AC B8XGZ8). In terms of tissue distribution, expressed by the venom gland.

It is found in the secreted. Functionally, the heterodimer non-edited LVP1 induces lipolysis in rat adipocytes. Induction of lipolysis by LVP1 appears to be mediated through the beta-2 adrenergic receptor pathway (ADRB2). Its function is as follows. The edited BmKBTx-like, similar to beta-toxins, may modulate voltage-gated sodium channels (Nav) and may block voltage-gated potassium channels (Kv). In Buthus israelis (Israeli scorpion), this protein is Lipolysis-activating peptide 1-alpha chain.